The chain runs to 145 residues: Basic phospholipase A2 P'513 (145 aa).

The signal sequence occupies residues 1-21 (MYPAHLLLLLAVCVSLLGASA). A propeptide spanning residues 22–27 (IPPLPL) is cleaved from the precursor. 7 disulfides stabilise this stretch: Cys38–Cys98, Cys54–Cys144, Cys56–Cys72, Cys71–Cys125, Cys78–Cys118, Cys87–Cys111, and Cys105–Cys116. Ca(2+)-binding residues include Tyr55, Gly57, and Gly59. His75 is an active-site residue. Asp76 lines the Ca(2+) pocket. Asp119 is an active-site residue.

This sequence belongs to the phospholipase A2 family. Group I subfamily. D49 sub-subfamily. It depends on Ca(2+) as a cofactor. Expressed by the venom gland.

The protein resides in the secreted. The catalysed reaction is a 1,2-diacyl-sn-glycero-3-phosphocholine + H2O = a 1-acyl-sn-glycero-3-phosphocholine + a fatty acid + H(+). In terms of biological role, PLA2 catalyzes the calcium-dependent hydrolysis of the 2-acyl groups in 3-sn-phosphoglycerides. The sequence is that of Basic phospholipase A2 P'513 from Laticauda laticaudata (Blue-ringed sea krait).